A 113-amino-acid chain; its full sequence is Large ribosomal subunit protein uL22 (113 aa).

The protein belongs to the universal ribosomal protein uL22 family. As to quaternary structure, part of the 50S ribosomal subunit.

This protein binds specifically to 23S rRNA; its binding is stimulated by other ribosomal proteins, e.g. L4, L17, and L20. It is important during the early stages of 50S assembly. It makes multiple contacts with different domains of the 23S rRNA in the assembled 50S subunit and ribosome. In terms of biological role, the globular domain of the protein is located near the polypeptide exit tunnel on the outside of the subunit, while an extended beta-hairpin is found that lines the wall of the exit tunnel in the center of the 70S ribosome. In Bacillus pumilus (strain SAFR-032), this protein is Large ribosomal subunit protein uL22.